The primary structure comprises 352 residues: MFEKSTWIRLPRSVVVGHGVLDRTAEAVEELYLDGRPLIVTSPTPEELAVDRLREQFVSAGFDPAVAVVEEASFDAVERVIETAERETAGFLVGFGGGKPIDIAKMAADERNCGFISVPTAASHDGIVSGRGSVPEGDTRHSVAAHPPLAVIADTELIANSPWRLTTAGCADIISNYTAVKDWQLAHRLKNVEYSEYAGALSQMTAEMLVDNSASIKRGLEESAWIVVKALVSSGVAMSIAGSSRPASGAEHLISHQLDRIAPETALHGHQVGVASIVTEYLHSGEGGDWRRVRDALASIDAPTTAAELGIDGERFIEATTSAHEIRDRYTILGDGIEREAAIEAAATTGVL.

NAD(+)-binding positions include 98–102 and 120–123; these read GKPID and TAAS. Asp125 serves as a coordination point for substrate. Ser129 serves as a coordination point for NAD(+). Asp172 is a substrate binding site. Positions 172 and 252 each coordinate Zn(2+). Substrate is bound at residue His256. His268 lines the Zn(2+) pocket.

It belongs to the glycerol-1-phosphate dehydrogenase family. Requires Zn(2+) as cofactor.

It localises to the cytoplasm. It carries out the reaction sn-glycerol 1-phosphate + NAD(+) = dihydroxyacetone phosphate + NADH + H(+). The enzyme catalyses sn-glycerol 1-phosphate + NADP(+) = dihydroxyacetone phosphate + NADPH + H(+). It functions in the pathway membrane lipid metabolism; glycerophospholipid metabolism. Catalyzes the NAD(P)H-dependent reduction of dihydroxyacetonephosphate (DHAP or glycerone phosphate) to glycerol 1-phosphate (G1P). The G1P thus generated is used as the glycerophosphate backbone of phospholipids in the cellular membranes of Archaea. The protein is Glycerol-1-phosphate dehydrogenase [NAD(P)+] of Natronomonas pharaonis (strain ATCC 35678 / DSM 2160 / CIP 103997 / JCM 8858 / NBRC 14720 / NCIMB 2260 / Gabara) (Halobacterium pharaonis).